Consider the following 295-residue polypeptide: Aspartate carbamoyltransferase catalytic subunit (295 aa).

2 residues coordinate carbamoyl phosphate: Arg54 and Thr55. L-aspartate is bound at residue Lys82. Carbamoyl phosphate is bound by residues Arg104, His132, and Gln135. L-aspartate-binding residues include Arg165 and Arg218. Carbamoyl phosphate contacts are provided by Gly257 and Pro258.

The protein belongs to the aspartate/ornithine carbamoyltransferase superfamily. ATCase family. Heterododecamer (2C3:3R2) of six catalytic PyrB chains organized as two trimers (C3), and six regulatory PyrI chains organized as three dimers (R2).

The enzyme catalyses carbamoyl phosphate + L-aspartate = N-carbamoyl-L-aspartate + phosphate + H(+). It functions in the pathway pyrimidine metabolism; UMP biosynthesis via de novo pathway; (S)-dihydroorotate from bicarbonate: step 2/3. Its function is as follows. Catalyzes the condensation of carbamoyl phosphate and aspartate to form carbamoyl aspartate and inorganic phosphate, the committed step in the de novo pyrimidine nucleotide biosynthesis pathway. In Wolbachia pipientis wMel, this protein is Aspartate carbamoyltransferase catalytic subunit.